The sequence spans 317 residues: Probable GTP 3',8-cyclase (317 aa).

A Radical SAM core domain is found at 4–223 (RYGRPLEDLR…KSEIREKHFR (220 aa)). Residue R13 participates in GTP binding. [4Fe-4S] cluster contacts are provided by C20, C24, and C27. K61 provides a ligand contact to GTP. G65 provides a ligand contact to S-adenosyl-L-methionine. T91 serves as a coordination point for GTP. S-adenosyl-L-methionine is bound at residue S115. Position 152 (K152) interacts with GTP. Positions 246 and 249 each coordinate [4Fe-4S] cluster. 251-253 (RVR) provides a ligand contact to GTP. A [4Fe-4S] cluster-binding site is contributed by C263.

Belongs to the radical SAM superfamily. MoaA family. It depends on [4Fe-4S] cluster as a cofactor.

The enzyme catalyses GTP + AH2 + S-adenosyl-L-methionine = (8S)-3',8-cyclo-7,8-dihydroguanosine 5'-triphosphate + 5'-deoxyadenosine + L-methionine + A + H(+). It functions in the pathway cofactor biosynthesis; molybdopterin biosynthesis. Functionally, catalyzes the cyclization of GTP to (8S)-3',8-cyclo-7,8-dihydroguanosine 5'-triphosphate. This chain is Probable GTP 3',8-cyclase, found in Metallosphaera sedula (strain ATCC 51363 / DSM 5348 / JCM 9185 / NBRC 15509 / TH2).